Consider the following 177-residue polypeptide: MASPRTVTVVALSVALGLFFVFMGTIKLTPRLSKDAYSEMKRAYKSYVRALPLLKKMGINSILLRKSIGALEVACGIVMTLVPGRPKDVANFFLLLLVLAVLFFHQLVGDPLKRYAHALVFGILLTCRLLIARKPEDRSSEKKSSPPGNAGSDGNAGNTEEQPSLYEKAPQGKMKLS.

At 1–5 the chain is on the cytoplasmic side; sequence MASPR. The helical transmembrane segment at 6–26 threads the bilayer; sequence TVTVVALSVALGLFFVFMGTI. Residues 27 to 61 lie on the Lumenal side of the membrane; it reads KLTPRLSKDAYSEMKRAYKSYVRALPLLKKMGINS. The interval 43–54 is interaction with NGFR; sequence AYKSYVRALPLL. A helical transmembrane segment spans residues 62–82; the sequence is ILLRKSIGALEVACGIVMTLV. Over 83–88 the chain is Cytoplasmic; that stretch reads PGRPKD. Residues 89–109 traverse the membrane as a helical segment; sequence VANFFLLLLVLAVLFFHQLVG. Over 110–114 the chain is Lumenal; that stretch reads DPLKR. A helical membrane pass occupies residues 115-132; that stretch reads YAHALVFGILLTCRLLIA. Residues 133–177 lie on the Cytoplasmic side of the membrane; sequence RKPEDRSSEKKSSPPGNAGSDGNAGNTEEQPSLYEKAPQGKMKLS. A disordered region spans residues 136–177; the sequence is EDRSSEKKSSPPGNAGSDGNAGNTEEQPSLYEKAPQGKMKLS.

Belongs to the DoxX family. In terms of assembly, may interact with NGFR. Interacts with RPN1, RPN2 and CANX.

The protein resides in the peroxisome membrane. Its subcellular location is the cytoplasmic vesicle. The protein localises to the endoplasmic reticulum membrane. Its function is as follows. Molecular chaperone which mediates the proper assembly and functional expression of the nicotinic acetylcholine receptors (nAChRs) throughout the brain. Essential for the proper folding, assembly, function and surface trafficking of alpha-7 (CHRNA7), alpha-4-beta-2, alpha-3-beta-2 and alpha-3-beta-4 receptors. Stably associates with ribophorin-1 (RPN1) and ribophorin-2 (RPN2) (components of the oligosaccharyl transferase (OST) complex) and with calnexin (CANX), both of which are critical for NACHO-mediated effects on CHRNA7 assembly and function. Facilitates the proper folding and assembly of alpha-6-beta-2 and alpha-6-beta-2-beta-3 receptors and acts at early stages of the nAChRs subunit assembly. Promotes the expression of the alpha-4(2):beta-2(3) stoichiometric form over the alpha-4(3):beta-2(2) form. This Bos taurus (Bovine) protein is Novel acetylcholine receptor chaperone (TMEM35A).